The chain runs to 143 residues: Large ribosomal subunit protein uL11 (143 aa).

This sequence belongs to the universal ribosomal protein uL11 family. In terms of assembly, part of the ribosomal stalk of the 50S ribosomal subunit. Interacts with L10 and the large rRNA to form the base of the stalk. L10 forms an elongated spine to which L12 dimers bind in a sequential fashion forming a multimeric L10(L12)X complex. One or more lysine residues are methylated.

In terms of biological role, forms part of the ribosomal stalk which helps the ribosome interact with GTP-bound translation factors. The polypeptide is Large ribosomal subunit protein uL11 (Kineococcus radiotolerans (strain ATCC BAA-149 / DSM 14245 / SRS30216)).